The chain runs to 490 residues: MFPRASALAKCMATVHRRGLLTSGAQSLVSKPVSEGDPEMFDILQQERHRQKHSITLIPSENFTSKAVMDLLGSELQNKYSEGYPGERYYGGNEIIDKSESLCQARALELYGLDPAKWGVNVQPLSGAPANLYVYSAIMNVGERLMGLDLPDGGHLSHGYQLKSGTPISFISKYFQSMPYHVDHTTGLIDYDNLQVLAKAFRPKVIVAGTSAYSRLIDYARFKEISQGCGAYLMSDMAHISGLVAANVVPSPFEHSDIVTTTTHKSLRGPRGAMIFFRKGIKSVTKKGKEIPYELEKKINFSVFPGHQGGPHNHTIGAMAVALKQAMSPEFKEYQQKIVDNSKWFAQELTKMGYKLVSGGTDNHLIVIDLSGTQVDGARVETILSALNIAANKNTIPGDKSALFPSGLRIGTPAMTTRGFGREEFSQVAKYIDSAVKLAENLKTLEPTTKLDARSRLNEFKKLCNESSEVAALSGEISKWVGQYPVPGDI.

Residues 1–20 (MFPRASALAKCMATVHRRGL) constitute a mitochondrion transit peptide. N6-(pyridoxal phosphate)lysine is present on lysine 265.

Belongs to the SHMT family. As to quaternary structure, homotetramer. Interacts with NAP1. Requires pyridoxal 5'-phosphate as cofactor.

It is found in the mitochondrion. It carries out the reaction (6R)-5,10-methylene-5,6,7,8-tetrahydrofolate + glycine + H2O = (6S)-5,6,7,8-tetrahydrofolate + L-serine. Its pathway is one-carbon metabolism; tetrahydrofolate interconversion. In terms of biological role, interconversion of serine and glycine. The sequence is that of Serine hydroxymethyltransferase, mitochondrial (SHM1) from Saccharomyces cerevisiae (strain ATCC 204508 / S288c) (Baker's yeast).